The primary structure comprises 316 residues: Ribosomal protein L11 methyltransferase (316 aa).

The S-adenosyl-L-methionine site is built by T157, G178, D200, and N243.

It belongs to the methyltransferase superfamily. PrmA family.

It is found in the cytoplasm. The enzyme catalyses L-lysyl-[protein] + 3 S-adenosyl-L-methionine = N(6),N(6),N(6)-trimethyl-L-lysyl-[protein] + 3 S-adenosyl-L-homocysteine + 3 H(+). Its function is as follows. Methylates ribosomal protein L11. This is Ribosomal protein L11 methyltransferase from Streptococcus pneumoniae (strain JJA).